Here is a 159-residue protein sequence, read N- to C-terminus: Eukaryotic translation initiation factor 5A (159 aa).

Over residues M1–A12 the composition is skewed to basic and acidic residues. Residues M1 to Q23 form a disordered region. At K52 the chain carries Hypusine.

This sequence belongs to the eIF-5A family. In terms of processing, lys-52 undergoes hypusination, a unique post-translational modification that consists in the addition of a butylamino group from spermidine to lysine side chain, leading to the formation of the unusual amino acid hypusine. eIF-5As are the only known proteins to undergo this modification, which is essential for their function.

Functionally, translation factor that promotes translation elongation and termination, particularly upon ribosome stalling at specific amino acid sequence contexts. Binds between the exit (E) and peptidyl (P) site of the ribosome and promotes rescue of stalled ribosome: specifically required for efficient translation of polyproline-containing peptides as well as other motifs that stall the ribosome. Acts as a ribosome quality control (RQC) cofactor by joining the RQC complex to facilitate peptidyl transfer during CAT tailing step. This chain is Eukaryotic translation initiation factor 5A (EIFSV1), found in Senecio vernalis (Spring groundsel).